The following is a 160-amino-acid chain: Transcription elongation factor GreB (160 aa).

This sequence belongs to the GreA/GreB family. GreB subfamily.

Functionally, necessary for efficient RNA polymerase transcription elongation past template-encoded arresting sites. The arresting sites in DNA have the property of trapping a certain fraction of elongating RNA polymerases that pass through, resulting in locked ternary complexes. Cleavage of the nascent transcript by cleavage factors such as GreA or GreB allows the resumption of elongation from the new 3'terminus. GreB releases sequences of up to 9 nucleotides in length. This chain is Transcription elongation factor GreB, found in Vibrio vulnificus (strain YJ016).